The following is a 539-amino-acid chain: Zinc finger and BTB domain-containing protein 7B (539 aa).

In terms of domain architecture, BTB spans 34–115 (CDLTIRTQGL…AYTATLTTSS (82 aa)). The residue at position 150 (Ser150) is a Phosphoserine. A disordered region spans residues 171–308 (ASGVPNGEDS…SPEELGSDED (138 aa)). Residues 182-196 (PQVPLPPPPPPPPRP) are compositionally biased toward pro residues. The segment covering 197 to 206 (VARRSRKPRK) has biased composition (basic residues). An N6-acetyllysine; by EP300; alternate mark is found at Lys206 and Lys212. Residues Lys206 and Lys212 each participate in a glycyl lysine isopeptide (Lys-Gly) (interchain with G-Cter in ubiquitin); alternate cross-link. Acidic residues predominate over residues 273 to 282 (YEGEEEEEEL). An N6-acetyllysine; by EP300; alternate modification is found at Lys335. Lys335 participates in a covalent cross-link: Glycyl lysine isopeptide (Lys-Gly) (interchain with G-Cter in ubiquitin); alternate. The interval 344–400 (MPQECPVCHKIIHGAGKLPRHMRTHTGEKPFACEVCGVRFTRNDKLKIHMRKHTGER) is required for interaction with and acetylation by EP300. The C2H2-type 1 zinc finger occupies 346 to 368 (QECPVCHKIIHGAGKLPRHMRTH). Thr369 bears the Phosphothreonine mark. 2 consecutive C2H2-type zinc fingers follow at residues 374–396 (FACE…MRKH) and 402–424 (YSCP…MHLH). Residues 430-454 (YECHLCHKAFAKEDHLQRHLKGQNC) form a C2H2-type 4; atypical zinc finger. Disordered stretches follow at residues 458–486 (RTRR…GLDL) and 501–539 (FWEQ…MESS). Pro residues predominate over residues 508–517 (TGPPVSTPGP).

Homodimerizes. Interacts with NCL, NEDD4 and YBX1. Interacts with HNRNPU (via RNA-binding RGG-box region); the interaction facilitates the recruitment of long non-coding RNA Blnc1 by ZBTB7B. Interacts with HDAC4 and HDAC5; the interaction allows the recruitment of HDAC4 and HDAC5 on CD8 loci for deacetylation and possible inhibition of CD8 genes expression. Acetylated directly and specifically by EP300. EP300-mediated acetylation of Lys-206, Lys-212 and Lys-335 stabilizes the protein by antagonizing ubiquitin conjugation. In terms of processing, ubiquitinated, leading to proteasomal degradation. Competes with acetylation on Lys-206, Lys-212 and Lys-335.

The protein localises to the nucleus. In terms of biological role, transcription regulator that acts as a key regulator of lineage commitment of immature T-cell precursors. Exerts distinct biological functions in the mammary epithelial cells and T cells in a tissue-specific manner. Necessary and sufficient for commitment of CD4 lineage, while its absence causes CD8 commitment. Development of immature T-cell precursors (thymocytes) to either the CD4 helper or CD8 killer T-cell lineages correlates precisely with their T-cell receptor specificity for major histocompatibility complex class II or class I molecules, respectively. Cross-antagonism between ZBTB7B and CBF complexes are determinative to CD4 versus CD8 cell fate decision. Suppresses RUNX3 expression and imposes CD4+ lineage fate by inducing the SOCS suppressors of cytokine signaling. induces, as a transcriptional activator, SOCS genes expression which represses RUNX3 expression and promotes the CD4+ lineage fate. During CD4 lineage commitment, associates with multiple sites at the CD8 locus, acting as a negative regulator of the CD8 promoter and enhancers by epigenetic silencing through the recruitment of class II histone deacetylases, such as HDAC4 and HDAC5, to these loci. Regulates the development of IL17-producing CD1d-restricted naural killer (NK) T cells. Also functions as an important metabolic regulator in the lactating mammary glands. Critical feed-forward regulator of insulin signaling in mammary gland lactation, directly regulates expression of insulin receptor substrate-1 (IRS-1) and insulin-induced Akt-mTOR-SREBP signaling. Transcriptional repressor of the collagen COL1A1 and COL1A2 genes. May also function as a repressor of fibronectin and possibly other extracellular matrix genes. Potent driver of brown fat development, thermogenesis and cold-induced beige fat formation. Recruits the brown fat lncRNA 1 (Blnc1):HNRNPU ribonucleoprotein complex to activate thermogenic gene expression in brown and beige adipocytes. This chain is Zinc finger and BTB domain-containing protein 7B, found in Homo sapiens (Human).